Here is a 234-residue protein sequence, read N- to C-terminus: Proteasome subunit alpha type-2 (234 aa).

An N-acetylalanine modification is found at Ala-2. Tyr-121 is modified (phosphotyrosine).

This sequence belongs to the peptidase T1A family. In terms of assembly, the 26S proteasome consists of a 20S proteasome core and two 19S regulatory subunits. The 20S proteasome core is a barrel-shaped complex made of 28 subunits that are arranged in four stacked rings. The two outer rings are each formed by seven alpha subunits, and the two inner rings are formed by seven beta subunits. The proteolytic activity is exerted by three beta-subunits PSMB5, PSMB6 and PSMB7.

It localises to the cytoplasm. It is found in the nucleus. In terms of biological role, component of the 20S core proteasome complex involved in the proteolytic degradation of most intracellular proteins. This complex plays numerous essential roles within the cell by associating with different regulatory particles. Associated with two 19S regulatory particles, forms the 26S proteasome and thus participates in the ATP-dependent degradation of ubiquitinated proteins. The 26S proteasome plays a key role in the maintenance of protein homeostasis by removing misfolded or damaged proteins that could impair cellular functions, and by removing proteins whose functions are no longer required. Associated with the PA200 or PA28, the 20S proteasome mediates ubiquitin-independent protein degradation. This type of proteolysis is required in several pathways including spermatogenesis (20S-PA200 complex) or generation of a subset of MHC class I-presented antigenic peptides (20S-PA28 complex). In Xenopus laevis (African clawed frog), this protein is Proteasome subunit alpha type-2 (psma2).